The primary structure comprises 38 residues: Large ribosomal subunit protein bL36c (38 aa).

This sequence belongs to the bacterial ribosomal protein bL36 family.

It localises to the plastid. The protein localises to the apicoplast. This Theileria parva (East coast fever infection agent) protein is Large ribosomal subunit protein bL36c (rpl36).